The following is a 249-amino-acid chain: DNA polymerase sliding clamp 1 (249 aa).

This sequence belongs to the PCNA family. As to quaternary structure, homotrimer. The subunits circularize to form a toroid; DNA passes through its center. Replication factor C (RFC) is required to load the toroid on the DNA.

Its function is as follows. Sliding clamp subunit that acts as a moving platform for DNA processing. Responsible for tethering the catalytic subunit of DNA polymerase and other proteins to DNA during high-speed replication. The chain is DNA polymerase sliding clamp 1 from Pyrobaculum aerophilum (strain ATCC 51768 / DSM 7523 / JCM 9630 / CIP 104966 / NBRC 100827 / IM2).